Here is a 103-residue protein sequence, read N- to C-terminus: Large ribosomal subunit protein bL21 (103 aa).

The protein belongs to the bacterial ribosomal protein bL21 family. Part of the 50S ribosomal subunit. Contacts protein L20.

In terms of biological role, this protein binds to 23S rRNA in the presence of protein L20. This is Large ribosomal subunit protein bL21 from Nitrosospira multiformis (strain ATCC 25196 / NCIMB 11849 / C 71).